The primary structure comprises 890 residues: Leucine--tRNA ligase (890 aa).

The short motif at 48 to 58 is the 'HIGH' region element; that stretch reads PYPSGKLHMGH. Positions 645–649 match the 'KMSKS' region motif; that stretch reads KMSKS. ATP is bound at residue lysine 648.

The protein belongs to the class-I aminoacyl-tRNA synthetase family.

The protein resides in the cytoplasm. The catalysed reaction is tRNA(Leu) + L-leucine + ATP = L-leucyl-tRNA(Leu) + AMP + diphosphate. This Polynucleobacter asymbioticus (strain DSM 18221 / CIP 109841 / QLW-P1DMWA-1) (Polynucleobacter necessarius subsp. asymbioticus) protein is Leucine--tRNA ligase.